We begin with the raw amino-acid sequence, 249 residues long: Aquaporin (249 aa).

At 1 to 11 the chain is on the cytoplasmic side; it reads MTRKWIKKLQS. Residues 12–32 form a helical membrane-spanning segment; that stretch reads YIGEFFASFIFGFAVYTSIIG. Residues 33 to 39 are Extracellular-facing; that stretch reads SAQTGQS. The helical transmembrane segment at 40–60 threads the bilayer; the sequence is AGPIIVALTIALSGVAIIYSF. Over 61–83 the chain is Cytoplasmic; the sequence is CDITVAHFNPAITFSAMCFRRLP. Positions 69–71 match the NPA motif; that stretch reads NPA. A helical membrane pass occupies residues 84–104; the sequence is FFGGIFIIIFQVAGFIIAGLA. Topologically, residues 105–133 are extracellular; sequence SVAVLPGKYKNKLEIARPKRVADNVSRGR. Residues 134-154 traverse the membrane as a helical segment; it reads IFGTEFFLTAILVYVAFAVGV. Over 155–179 the chain is Cytoplasmic; sequence NPYTPPKDEHGDQLDPDEGLTEGRK. A helical transmembrane segment spans residues 180–200; the sequence is ITAPLAIGFTLGFCALLGIAS. The Extracellular segment spans residues 201 to 223; sequence SGGAFNPGIVLSPMILTGTWDFW. Residues 206–208 carry the NPG motif; that stretch reads NPG. A helical membrane pass occupies residues 224–246; the sequence is WVYLLGQFSGGLLGGGLQRFLLY. The Cytoplasmic segment spans residues 247–249; the sequence is KIF.

The protein belongs to the MIP/aquaporin (TC 1.A.8) family.

It localises to the cell membrane. Functionally, water channel required to facilitate the transport of water across membranes. Involved in osmotolerance. The sequence is that of Aquaporin (AQP) from Vairimorpha ceranae (strain BRL01) (Microsporidian parasite).